Consider the following 776-residue polypeptide: Glucocorticoid receptor (776 aa).

The span at 1-11 (MDSKESLTSPS) shows a compositional bias: polar residues. Residues 1–25 (MDSKESLTSPSEEIPSSVHGQERGN) are disordered. The segment at 1–419 (MDSKESLTSP…LSAVGPPPKF (419 aa)) is modulating. T8 bears the Phosphothreonine mark. Residue R23 is modified to Omega-N-methylarginine. Phosphoserine occurs at positions 45, 113, and 134. Residues 157–178 (PETPSDVSSEQQNLKGQTGTNG) are disordered. Positions 161-174 (SDVSSEQQNLKGQT) are enriched in polar residues. Residues S203, S211, and S226 each carry the phosphoserine modification. Residue K258 forms a Glycyl lysine isopeptide (Lys-Gly) (interchain with G-Cter in SUMO2) linkage. S267 carries the phosphoserine modification. Glycyl lysine isopeptide (Lys-Gly) (interchain with G-Cter in SUMO); alternate cross-links involve residues K277 and K293. Residues K277 and K293 each participate in a glycyl lysine isopeptide (Lys-Gly) (interchain with G-Cter in SUMO2); alternate cross-link. 2 positions are modified to phosphoserine: S307 and S404. The segment at residues 417 to 492 (PKFCLVCSDE…AGMNLEARKT (76 aa)) is a DNA-binding region (nuclear receptor). A Glycyl lysine isopeptide (Lys-Gly) (interchain with G-Cter in ubiquitin) cross-link involves residue K418. NR C4-type zinc fingers lie at residues 420–440 (CLVC…CGSC) and 456–480 (CAGR…YRKC). 4 positions are modified to N6-acetyllysine: K479, K491, K493, and K494. The tract at residues 484-776 (GMNLEARKTK…NIKKLLFHQK (293 aa)) is interaction with CLOCK. The interval 486–522 (NLEARKTKKKIKGIQQTTTGISQETPENSANKTIVPA) is hinge. Positions 523–757 (TLPQLTPTPV…FPEMLAEIIT (235 aa)) constitute an NR LBD domain. The segment at 531-696 (PVSLLEVIEP…EIRMTYIKEL (166 aa)) is interaction with CRY1. Residue K702 forms a Glycyl lysine isopeptide (Lys-Gly) (interchain with G-Cter in SUMO) linkage.

This sequence belongs to the nuclear hormone receptor family. NR3 subfamily. As to quaternary structure, heteromultimeric cytoplasmic complex with HSP90AA1, HSPA1A/HSPA1B, and FKBP5 or another immunophilin such as PPID, STIP1, or the immunophilin homolog PPP5C. Upon ligand binding FKBP5 dissociates from the complex and FKBP4 takes its place, thereby linking the complex to dynein and mediating transport to the nucleus, where the complex dissociates. Probably forms a complex composed of chaperones HSP90 and HSP70, co-chaperones CDC37, PPP5C, TSC1 and client protein TSC2, CDK4, AKT, RAF1 and NR3C1; this complex does not contain co-chaperones STIP1/HOP and PTGES3/p23. Directly interacts with UNC45A. Binds to DNA as a homodimer, and as heterodimer with NR3C2 or the retinoid X receptor. Binds STAT5A and STAT5B homodimers and heterodimers. Interacts with NRIP1, POU2F1, POU2F2 and TRIM28. Interacts with several coactivator complexes, including the SMARCA4 complex, CREBBP/EP300, TADA2L (Ada complex) and p160 coactivators such as NCOA2 and NCOA6. Interaction with BAG1 inhibits transactivation. Interacts with HEXIM1 and TGFB1I1. Interacts with NCOA1. Interacts with NCOA3, SMARCA4, SMARCC1, SMARCD1, and SMARCE1. Interacts with CLOCK, CRY1 and CRY2 in a ligand-dependent fashion. Interacts with CIART. Interacts with RWDD3. Interacts with UBE2I/UBC9 and this interaction is enhanced in the presence of RWDD3. Interacts with GRIP1. Interacts with NR4A3 (via nuclear receptor DNA-binding domain), represses transcription activity of NR4A3 on the POMC promoter Nur response element (NurRE). Directly interacts with PNRC2 to attract and form a complex with UPF1 and DCP1A; the interaction leads to rapid mRNA degradation. Interacts with GSK3B. Interacts with FNIP1 and FNIP2. Interacts (via C-terminus) with NR3C1 (via C-terminus). Interacts with MCM3AP. Interacts (via domain NR LBD) with HSP90AA1 and HSP90AB1. In the absence of hormonal ligand, interacts with TACC1. In terms of processing, acetylation by CLOCK reduces its binding to glucocorticoid response elements and its transcriptional activity. Increased proteasome-mediated degradation in response to glucocorticoids. Post-translationally, phosphorylated in the absence of hormone; becomes hyperphosphorylated in the presence of glucocorticoid. The Ser-203, Ser-226 and Ser-404-phosphorylated forms are mainly cytoplasmic, and the Ser-211-phosphorylated form is nuclear. Phosphorylation at Ser-211 increases transcriptional activity. Phosphorylation at Ser-203, Ser-226 and Ser-404 decreases signaling capacity. Phosphorylation at Ser-404 may protect from glucocorticoid-induced apoptosis. Phosphorylation at Ser-203 and Ser-211 is not required in regulation of chromosome segregation. May be dephosphorylated by PPP5C, attenuates NR3C1 action. In terms of processing, sumoylation at Lys-277 and Lys-293 negatively regulates its transcriptional activity. Sumoylation at Lys-702 positively regulates its transcriptional activity in the presence of RWDD3. Sumoylation at Lys-277 and Lys-293 is dispensable whereas sumoylation at Lys-702 is critical for the stimulatory effect of RWDD3 on its transcriptional activity. Heat shock increases sumoylation in a RWDD3-dependent manner. Ubiquitinated by UBR5, leading to its degradation: UBR5 specifically recognizes and binds ligand-bound NR3C1 when it is not associated with coactivators (NCOAs). In presence of NCOAs, the UBR5-degron is not accessible, preventing its ubiquitination and degradation.

It localises to the cytoplasm. The protein resides in the nucleus. It is found in the mitochondrion. Its subcellular location is the cytoskeleton. The protein localises to the spindle. It localises to the microtubule organizing center. The protein resides in the centrosome. It is found in the chromosome. Its subcellular location is the nucleoplasm. Functionally, receptor for glucocorticoids (GC). Has a dual mode of action: as a transcription factor that binds to glucocorticoid response elements (GRE), both for nuclear and mitochondrial DNA, and as a modulator of other transcription factors. Affects inflammatory responses, cellular proliferation and differentiation in target tissues. Involved in chromatin remodeling. Plays a role in rapid mRNA degradation by binding to the 5' UTR of target mRNAs and interacting with PNRC2 in a ligand-dependent manner which recruits the RNA helicase UPF1 and the mRNA-decapping enzyme DCP1A, leading to RNA decay. Could act as a coactivator for STAT5-dependent transcription upon growth hormone (GH) stimulation and could reveal an essential role of hepatic GR in the control of body growth. Mediates glucocorticoid-induced apoptosis. Promotes accurate chromosome segregation during mitosis. May act as a tumor suppressor. May play a negative role in adipogenesis through the regulation of lipolytic and antilipogenic gene expression. The sequence is that of Glucocorticoid receptor (NR3C1) from Tupaia belangeri (Common tree shrew).